We begin with the raw amino-acid sequence, 492 residues long: High-affinity nickel transport protein (492 aa).

Over 1–24 (MLSRWTRRVNESRLAQRKLTLLGR) the chain is Cytoplasmic. A helical transmembrane segment spans residues 25–45 (AIALVVGELLFNAVCWIAAGI). Over 46-50 (CFGKT) the chain is Extracellular. Residues 51 to 71 (DGILGLALLAWTIGLRHGLDA) form a helical membrane-spanning segment. Topologically, residues 72-94 (DHISAIDNATRQLVSQGQLPITC) are cytoplasmic. Residues 95–115 (GLFFSLGHSTIVIVVNVAIAV) traverse the membrane as a helical segment. At 116–136 (SVDIYDKLDRVGSIGGIVGAA) the chain is on the extracellular side. The chain crosses the membrane as a helical span at residues 137 to 157 (VSASFLFLIACLNIYFLVGAI). At 158-210 (KQRRSMKRRQALGLPPDEDEGDPSKIYGGGCMVRVVGPILRAVDRPWKMYPVG) the chain is on the cytoplasmic side. A helical membrane pass occupies residues 211-231 (VLFGFGFDTASSIALLAISAI). The Extracellular portion of the chain corresponds to 232-239 (AQRGPNGD). The chain crosses the membrane as a helical span at residues 240–260 (AISHGKIVILPFLFTAGMSLV). Residues 261 to 382 (DSLDSILMLY…AKANTMSSLS (122 aa)) are Cytoplasmic-facing. Residues 383–403 (IILTLLSILVALSISLIEIMG) form a helical membrane-spanning segment. Topologically, residues 404 to 439 (LIGDNCTQCQDAANDPDGGGLAGSWWRAWARANDQS) are extracellular. N-linked (GlcNAc...) asparagine glycosylation occurs at Asn-408. The chain crosses the membrane as a helical span at residues 440-460 (GYIGAAIVGCFAAILAGWYGA). The Cytoplasmic segment spans residues 461-492 (KWGKKKWKARRDANAAIVLEDNEDDAAETPVA).

The protein belongs to the NiCoT transporter (TC 2.A.52) family.

Its subcellular location is the cell membrane. Functionally, high-affinity nickel-specific transporter responsible for nickel uptake and required for high levels of activity of urease URE1. Does not transport cobalt. Plays a role in host brain invasion. In Cryptococcus neoformans var. grubii serotype A (strain H99 / ATCC 208821 / CBS 10515 / FGSC 9487) (Filobasidiella neoformans var. grubii), this protein is High-affinity nickel transport protein.